Consider the following 469-residue polypeptide: Putative dipeptidase SAR1836 (469 aa).

His84 serves as a coordination point for Zn(2+). Asp86 is an active-site residue. Asp115 contributes to the Zn(2+) binding site. Residue Glu149 is the Proton acceptor of the active site. Glu150, Asp173, and His440 together coordinate Zn(2+).

The protein belongs to the peptidase M20A family. Requires Zn(2+) as cofactor.

This chain is Putative dipeptidase SAR1836, found in Staphylococcus aureus (strain MRSA252).